Here is a 144-residue protein sequence, read N- to C-terminus: Large ribosomal subunit protein uL15 (144 aa).

Positions 1-54 are disordered; that stretch reads MRLNTLSPAPGRVTSRKRVGRGIGSGLGKTAGRGHKGLKSRSGGTVKPGFEGGQ. Gly residues predominate over residues 21–31; the sequence is RGIGSGLGKTA.

Belongs to the universal ribosomal protein uL15 family. Part of the 50S ribosomal subunit.

Functionally, binds to the 23S rRNA. The polypeptide is Large ribosomal subunit protein uL15 (Teredinibacter turnerae (strain ATCC 39867 / T7901)).